The chain runs to 479 residues: Glutathione gamma-glutamylcysteinyltransferase 3 (479 aa).

In terms of domain architecture, Peptidase C83 spans 1–221 (MASAGLYRRV…GYMIISKLKR (221 aa)). Residues C56, H162, and D180 contribute to the active site.

This sequence belongs to the phytochelatin synthase family. Expressed in roots, nodules and leaves.

It carries out the reaction [Glu(-Cys)](n)-Gly + glutathione + H(+) = [Glu(-Cys)](n+1)-Gly + glycine. Its activity is regulated as follows. Requires cadmium for activity. Its function is as follows. Involved in the synthesis of phytochelatins (PC) and homophytochelatins (hPC), the heavy-metal-binding peptides of plants. This is Glutathione gamma-glutamylcysteinyltransferase 3 (PCS3) from Lotus japonicus (Lotus corniculatus var. japonicus).